The sequence spans 199 residues: GTP cyclohydrolase-2 (199 aa).

A GTP-binding site is contributed by 49–53 (RIHSE). C54, C65, and C67 together coordinate Zn(2+). GTP is bound by residues Q70, 92–94 (EGR), and T114. Catalysis depends on D126, which acts as the Proton acceptor. Residue R128 is the Nucleophile of the active site. GTP-binding residues include T149 and K154. Residues 172-199 (ETGRNPHNSHYLETKRGKLGHLLEGDSE) form a disordered region.

Belongs to the GTP cyclohydrolase II family. Zn(2+) is required as a cofactor.

The catalysed reaction is GTP + 4 H2O = 2,5-diamino-6-hydroxy-4-(5-phosphoribosylamino)-pyrimidine + formate + 2 phosphate + 3 H(+). It participates in cofactor biosynthesis; riboflavin biosynthesis; 5-amino-6-(D-ribitylamino)uracil from GTP: step 1/4. Functionally, catalyzes the conversion of GTP to 2,5-diamino-6-ribosylamino-4(3H)-pyrimidinone 5'-phosphate (DARP), formate and pyrophosphate. The polypeptide is GTP cyclohydrolase-2 (Teredinibacter turnerae (strain ATCC 39867 / T7901)).